A 324-amino-acid chain; its full sequence is tRNA(Ile)-lysidine synthase (324 aa).

ATP is bound at residue 33 to 38; the sequence is SGGPDS.

Belongs to the tRNA(Ile)-lysidine synthase family.

The protein localises to the cytoplasm. It carries out the reaction cytidine(34) in tRNA(Ile2) + L-lysine + ATP = lysidine(34) in tRNA(Ile2) + AMP + diphosphate + H(+). In terms of biological role, ligates lysine onto the cytidine present at position 34 of the AUA codon-specific tRNA(Ile) that contains the anticodon CAU, in an ATP-dependent manner. Cytidine is converted to lysidine, thus changing the amino acid specificity of the tRNA from methionine to isoleucine. The protein is tRNA(Ile)-lysidine synthase of Thermobifida fusca (strain YX).